The chain runs to 335 residues: UPF0353 protein NFA_34780 (335 aa).

A run of 2 helical transmembrane segments spans residues 8–28 (ALIW…YVLV) and 61–81 (IALM…PTSV). A VWFA domain is found at 90–295 (TVVLVMDVSL…EELTAVYDTL (206 aa)). Residues 310 to 330 (RPWLLLGMLVVAAGIVTGLLY) form a helical membrane-spanning segment.

This sequence belongs to the UPF0353 family.

It is found in the cell membrane. This chain is UPF0353 protein NFA_34780, found in Nocardia farcinica (strain IFM 10152).